Here is a 439-residue protein sequence, read N- to C-terminus: Secreted aspartic protease LUC8 (439 aa).

An N-terminal signal peptide occupies residues 1 to 20; it reads MMHAFHHLAVLLIGSLPASA. N-linked (GlcNAc...) asparagine glycosylation is found at Asn-33 and Asn-54. A Peptidase A1 domain is found at 51-435; the sequence is YLFNITVGTP…DFETQSFGLA (385 aa). The active site involves Asp-69. Residues Asn-110, Asn-126, Asn-179, and Asn-289 are each glycosylated (N-linked (GlcNAc...) asparagine). Residue Asp-300 is part of the active site. N-linked (GlcNAc...) asparagine glycosylation is found at Asn-329 and Asn-373. An intrachain disulfide couples Cys-355 to Cys-391.

It belongs to the peptidase A1 family.

It localises to the secreted. In terms of biological role, secreted aspartic protease; part of the gene cluster that mediates the biosynthesis of the mycotoxin lucilactaene and the lucilactaene-related compound NG-391 that act as cell cycle inhibitors with potent growth inhibitory activity against malarial parasites, moderate growth inhibitory activity against cancer cells, and no activity against bacteria and fungi. Within the cluster, LUC7 and LUC8 encode proteins which are not commonly involved in the biosynthesis of secondary metabolites and are not essential for lucilactaene biosynthesis. In Fusarium sp, this protein is Secreted aspartic protease LUC8.